Reading from the N-terminus, the 118-residue chain is Na(+)/H(+) antiporter subunit G1 (118 aa).

The next 3 helical transmembrane spans lie at 9-29, 47-67, and 69-89; these read LAVI…IGII, LGAI…DGYI, and MQLI…SHLI.

The protein belongs to the CPA3 antiporters (TC 2.A.63) subunit G family. As to quaternary structure, may form a heterooligomeric complex that consists of seven subunits: mnhA1, mnhB1, mnhC1, mnhD1, mnhE1, mnhF1 and mnhG1.

It is found in the cell membrane. Its function is as follows. Mnh complex is a Na(+)/H(+) antiporter involved in Na(+) excretion. The protein is Na(+)/H(+) antiporter subunit G1 (mnhG1) of Staphylococcus haemolyticus (strain JCSC1435).